Here is a 298-residue protein sequence, read N- to C-terminus: Oligodendrocyte transcription factor 2 (298 aa).

The segment covering 1-13 (MDSDASLVSSRPS) has biased composition (polar residues). 2 disordered regions span residues 1–60 (MDSD…SAEL) and 79–102 (SSSS…MTEP). A compositionally biased stretch (gly residues) spans 26–41 (NKGGGGGGGGGGGFTG). Residues 79-91 (SSSSSASSASSAS) are compositionally biased toward low complexity. The bHLH domain maps to 106–160 (QLRLKINSRERKRMHDLNIAMDGLREVMPYAHGPSVRKLSKIATLLLARNYILML).

It is found in the nucleus. Required for oligodendrocyte and motor neuron specification in the spinal cord. This Gallus gallus (Chicken) protein is Oligodendrocyte transcription factor 2 (OLIG2).